A 570-amino-acid chain; its full sequence is Proline--tRNA ligase (570 aa).

Belongs to the class-II aminoacyl-tRNA synthetase family. ProS type 1 subfamily. As to quaternary structure, homodimer.

The protein localises to the cytoplasm. The catalysed reaction is tRNA(Pro) + L-proline + ATP = L-prolyl-tRNA(Pro) + AMP + diphosphate. Functionally, catalyzes the attachment of proline to tRNA(Pro) in a two-step reaction: proline is first activated by ATP to form Pro-AMP and then transferred to the acceptor end of tRNA(Pro). As ProRS can inadvertently accommodate and process non-cognate amino acids such as alanine and cysteine, to avoid such errors it has two additional distinct editing activities against alanine. One activity is designated as 'pretransfer' editing and involves the tRNA(Pro)-independent hydrolysis of activated Ala-AMP. The other activity is designated 'posttransfer' editing and involves deacylation of mischarged Ala-tRNA(Pro). The misacylated Cys-tRNA(Pro) is not edited by ProRS. In Clostridium beijerinckii (strain ATCC 51743 / NCIMB 8052) (Clostridium acetobutylicum), this protein is Proline--tRNA ligase.